The chain runs to 251 residues: 2,3-bisphosphoglycerate-dependent phosphoglycerate mutase (251 aa).

Substrate is bound by residues arginine 11–asparagine 18, threonine 24–glycine 25, arginine 63, glutamate 90–tyrosine 93, lysine 101, arginine 117–arginine 118, and glycine 184–asparagine 185. Catalysis depends on histidine 12, which acts as the Tele-phosphohistidine intermediate. Catalysis depends on glutamate 90, which acts as the Proton donor/acceptor.

It belongs to the phosphoglycerate mutase family. BPG-dependent PGAM subfamily.

It carries out the reaction (2R)-2-phosphoglycerate = (2R)-3-phosphoglycerate. Its pathway is carbohydrate degradation; glycolysis; pyruvate from D-glyceraldehyde 3-phosphate: step 3/5. In terms of biological role, catalyzes the interconversion of 2-phosphoglycerate and 3-phosphoglycerate. The protein is 2,3-bisphosphoglycerate-dependent phosphoglycerate mutase of Mycobacterium ulcerans (strain Agy99).